The following is a 1044-amino-acid chain: Diacylglycerol lipase-alpha (1044 aa).

Residues 1 to 22 (MPGIVVFRRRWSVGSDDLVLPA) are Cytoplasmic-facing. Residues 23–43 (IFLFLLHTTWFVILSVVLFGL) form a helical membrane-spanning segment. Residues 44–60 (VYNPHEACSLNLVDHGR) lie on the Extracellular side of the membrane. Residues 61–81 (GYLGILLSCMIAEMAIIWLSM) traverse the membrane as a helical segment. Residues 82–101 (RGGILYTEPRDSMQYVLYVR) lie on the Cytoplasmic side of the membrane. The helical transmembrane segment at 102 to 122 (LAILVIEFIYAIVGIVWLTQY) threads the bilayer. At 123 to 136 (YTSCNDLTAKNVTL) the chain is on the extracellular side. N-linked (GlcNAc...) asparagine glycosylation is present at Asn133. Residues 137-157 (GMVVCNWVVILSVCITVLCVF) traverse the membrane as a helical segment. The Cytoplasmic segment spans residues 158 to 1044 (DPTGRTFVKL…KQDDLVISAR (887 aa)). Active-site charge relay system residues include Ser472 and Asp524. Ser728, Ser730, Ser733, Ser744, Ser784, Ser786, Ser808, Ser810, Ser835, Ser849, and Ser954 each carry phosphoserine. Residues 848–897 (LSKHSQDTQPLEAALGSGGVTPERPPSATIEEEEAAGGSEGGGVAPRGEL) form a disordered region. The disordered stretch occupies residues 1013–1044 (QECLATDKIRTSTPTGHGASPTKQDDLVISAR). Position 1025 is a phosphothreonine (Thr1025).

Belongs to the AB hydrolase superfamily. Lipase family. As to quaternary structure, interacts (via C-terminal) with CAMK2A; leading to the phosphorylation and inhibition of DAGLA enzymatic activity. Interacts (via PPXXF motif) with HOMER1 and HOMER2; this interaction is required for DAGLA membrane localization. Requires Ca(2+) as cofactor. Post-translationally, phosphorylated at Ser-784 and Ser-810 by CAMK2A; phosphorylation by CAMK2A inhibits diacylglycerol lipase activity. In terms of tissue distribution, highly expressed by principal cells in the hippocampus. In embryonic brains, it is present in axonal tracts, while in adults it localizes to dendritic fields, correlating with the developmental change in requirement for 2-AG synthesis from the pre- to the postsynaptic compartment. Concentrated in heads of dendritic spines throughout the hippocampal formation. Highly compartmentalized into a wide perisynaptic annulus around the postsynaptic density of axospinous contacts but not intrasynaptically (at protein level).

It localises to the cell membrane. The protein localises to the cell projection. It is found in the dendritic spine membrane. The protein resides in the postsynaptic density membrane. Its subcellular location is the early endosome membrane. It catalyses the reaction a 1,2-diacyl-sn-glycerol + H2O = a 2-acylglycerol + a fatty acid + H(+). The enzyme catalyses 1-octadecanoyl-2-(5Z,8Z,11Z,14Z-eicosatetraenoyl)-sn-glycerol + H2O = 2-(5Z,8Z,11Z,14Z-eicosatetraenoyl)-glycerol + octadecanoate + H(+). The catalysed reaction is 1,2-di-(9Z-octadecenoyl)-sn-glycerol + H2O = 2-(9Z-octadecenoyl)-glycerol + (9Z)-octadecenoate + H(+). It carries out the reaction 1-(9Z-octadecenoyl)-2-(5Z,8Z,11Z,14Z-eicosatetraenoyl)-sn-glycerol + H2O = 2-(5Z,8Z,11Z,14Z-eicosatetraenoyl)-glycerol + (9Z)-octadecenoate + H(+). It catalyses the reaction 1-(9Z-octadecenoyl)-2-octadecanoyl-sn-glycerol + H2O = 2-octadecanoylglycerol + (9Z)-octadecenoate + H(+). The enzyme catalyses 1-(9Z-octadecenoyl)-2-(9Z,12Z-octadecadienoyl)-sn-glycerol + H2O = 2-(9Z,12Z-octadecadienoyl)-glycerol + (9Z)-octadecenoate + H(+). The catalysed reaction is 1-(9Z-octadecenoyl)-2-O-(5Z,8Z,11Z,14Z-eicosatetraenyl)-sn-glycerol + H2O = 2-O-(5Z,8Z,11Z,14Z)-eicosatetraenylglycerol + (9Z)-octadecenoate + H(+). Its activity is regulated as follows. Inhibited by 1,2,3-triazole urea covalent inhibitor KT172, DH376 and DO34. Inhibited by p-hydroxy-mercuri-benzoate and HgCl(2), but not to PMSF. Also inhibited by RHC80267. Diacylglycerol lipase activity is inhibited by the phosphorylation of Ser-784 and Ser-810 by CAMK2A. Serine hydrolase that hydrolyzes arachidonic acid-esterified diacylglycerols (DAGs) to produce the principal endocannabinoid (eCB), 2-arachidonoylglycerol (2-AG). Preferentially hydrolyzes sn-1 fatty acids from diacylglycerols (DAG) that contain arachidonic acid (AA) esterified at the sn-2 position to biosynthesize 2-AG. Has negligible activity against other lipids including monoacylglycerols and phospholipids. Plays a key role in regulating 2-AG signaling in the central nervous system (CNS). Controls the activity of 2-AG as a retrograde messenger at neuronal synapses. Supports axonal growth during development and adult neurogenesis. Plays a role for eCB signaling in the physiological regulation of anxiety and depressive behaviors. Also regulates neuroinflammatory responses in the brain, in particular, LPS-induced microglial activation. In Mus musculus (Mouse), this protein is Diacylglycerol lipase-alpha (Dagla).